The chain runs to 162 residues: Transcriptional repressor NrdR (162 aa).

A zinc finger lies at 3–34 (CPFCQFEGLKVTDSRDAMEMNAIRRRRECLNC). In terms of domain architecture, ATP-cone spans 48–138 (VQVQKRDGTY…VYKRFKDLGE (91 aa)).

It belongs to the NrdR family. It depends on Zn(2+) as a cofactor.

Its function is as follows. Negatively regulates transcription of bacterial ribonucleotide reductase nrd genes and operons by binding to NrdR-boxes. This is Transcriptional repressor NrdR from Protochlamydia amoebophila (strain UWE25).